Here is a 530-residue protein sequence, read N- to C-terminus: Formate--tetrahydrofolate ligase (530 aa).

ATP is bound at residue 46–53; sequence TPEGEGKT.

The protein belongs to the formate--tetrahydrofolate ligase family.

It carries out the reaction (6S)-5,6,7,8-tetrahydrofolate + formate + ATP = (6R)-10-formyltetrahydrofolate + ADP + phosphate. Its pathway is one-carbon metabolism; tetrahydrofolate interconversion. The polypeptide is Formate--tetrahydrofolate ligase (Malacoplasma penetrans (strain HF-2) (Mycoplasma penetrans)).